The following is a 216-amino-acid chain: Ras-related protein Rab-2B (216 aa).

GTP is bound by residues G16, V17, G18, K19, S20, C21, and T38. Residue S20 coordinates Mg(2+). The short motif at 37 to 42 (LTIGVE) is the Switch 1 element. Residues T38 and D61 each contribute to the Mg(2+) site. Positions 63-72 (AGQESFRSIT) match the Switch 2 motif. The GTP site is built by G64, N119, K120, D122, A150, and K151. Residues 189-207 (PQQSITSSVGPCSPQQNVS) are compositionally biased toward polar residues. A disordered region spans residues 189-216 (PQQSITSSVGPCSPQQNVSDIGPDSGCC). 2 S-geranylgeranyl cysteine lipidation sites follow: C215 and C216.

The protein belongs to the small GTPase superfamily. Rab family. Interacts (in GTP-bound form) with GARIN4 (via N-terminus). Interacts (in GTP-bound form) with GARIN5A. Interacts (in GTP-bound form) with GARIN1B. Interacts with VPS39 and VPS41. Mg(2+) serves as cofactor.

The protein localises to the cell membrane. Its subcellular location is the endoplasmic reticulum membrane. The protein resides in the golgi apparatus membrane. It localises to the cytoplasmic vesicle. It is found in the secretory vesicle. The protein localises to the acrosome. Its subcellular location is the autophagosome membrane. It catalyses the reaction GTP + H2O = GDP + phosphate + H(+). Regulated by guanine nucleotide exchange factors (GEFs) which promote the exchange of bound GDP for free GTP, GTPase activating proteins (GAPs) which increase the GTP hydrolysis activity, and GDP dissociation inhibitors (GDIs) which inhibit the dissociation of the nucleotide from the GTPase. In terms of biological role, the small GTPases Rab are key regulators of intracellular membrane trafficking, from the formation of transport vesicles to their fusion with membranes. Rabs cycle between active GTP-bound and inactive GDP-bound states. In their active state, drive transport of vesicular carriers from donor organelles to acceptor organelles to regulate the membrane traffic that maintains organelle identity and morphology. Regulates the compacted morphology of the Golgi. Promotes cytosolic DNA-induced innate immune responses. Regulates IFN responses against DNA viruses by regulating the CGAS-STING signaling axis. Together with RAB2A redundantly required for efficient autophagic flux. The chain is Ras-related protein Rab-2B (Rab2b) from Mus musculus (Mouse).